The sequence spans 309 residues: MDQHTLDVEDTADARHPAGTSCPSDAALLRDTGLLADAALLSDTVRPTNAALPTDAAYPAVNVRDREAAWPPALNFCSRHPKLYGLVALVLLLLIAACVPIFTRTEPRPALTITTSPNLGTRENNADQVTPVSHIGCPNTTQQGSPVFAKLLAKNQASLCNTTLNWHSQDGAGSSYLSQGLRYEEDKKELVVDSPGLYYVFLELKLSPTFTNTGHKVQGWVSLVLQAKPQVDDFDNLALTVELFPCSMENKLVDRSWSQLLLLKAGHRLSVGLRAYLHGAQDAYRDWELSYPNTTSFGLFLVKPDNPWE.

Basic and acidic residues predominate over residues 1-16 (MDQHTLDVEDTADARH). Positions 1–20 (MDQHTLDVEDTADARHPAGT) are disordered. Residues 1–82 (MDQHTLDVED…ALNFCSRHPK (82 aa)) are Cytoplasmic-facing. Residues 83–103 (LYGLVALVLLLLIAACVPIFT) form a helical; Signal-anchor for type II membrane protein membrane-spanning segment. At 104–309 (RTEPRPALTI…FLVKPDNPWE (206 aa)) the chain is on the extracellular side. Residues Asn139, Asn161, and Asn293 are each glycosylated (N-linked (GlcNAc...) asparagine). The THD domain occupies 147 to 302 (VFAKLLAKNQ…NTTSFGLFLV (156 aa)).

The protein belongs to the tumor necrosis factor family. In terms of assembly, homotrimer.

Its subcellular location is the membrane. In terms of biological role, cytokine that binds to TNFRSF9. Induces the proliferation of activated peripheral blood T-cells. May have a role in activation-induced cell death (AICD). May play a role in cognate interactions between T-cells and B-cells/macrophages. The polypeptide is Tumor necrosis factor ligand superfamily member 9 (Tnfsf9) (Mus musculus (Mouse)).